The sequence spans 454 residues: Glutaredoxin domain-containing cysteine-rich protein CG31559 (454 aa).

Disordered regions lie at residues 30-88 (ETAD…QRQK) and 217-239 (RSAR…GSDS). Residues 33–45 (DSGNGSDLESTGL) show a composition bias toward polar residues. Residues 58 to 69 (SSLGSDSMHGSS) show a composition bias toward low complexity. Positions 70–84 (TEYVRQSASQPSGQR) are enriched in polar residues. Residues 217–227 (RSARSGDEADH) are compositionally biased toward basic and acidic residues. The 106-residue stretch at 295–400 (NAKNFKEKDL…QLLKPYKSMA (106 aa)) folds into the Glutaredoxin domain.

The protein belongs to the GRXCR1 family.

This is Glutaredoxin domain-containing cysteine-rich protein CG31559 from Drosophila melanogaster (Fruit fly).